The sequence spans 396 residues: Elongation factor Tu (396 aa).

The tr-type G domain maps to 10 to 206 (KPHCNIGTIG…AVDSYIPQPE (197 aa)). Residues 19 to 26 (GHVDHGKT) are G1. 19–26 (GHVDHGKT) is a GTP binding site. Thr26 provides a ligand contact to Mg(2+). The segment at 60–64 (GITIS) is G2. The segment at 81–84 (DCPG) is G3. GTP is bound by residues 81–85 (DCPGH) and 136–139 (NKVD). The interval 136–139 (NKVD) is G4. The interval 174–176 (SAV) is G5.

The protein belongs to the TRAFAC class translation factor GTPase superfamily. Classic translation factor GTPase family. EF-Tu/EF-1A subfamily. Monomer.

It is found in the cytoplasm. It catalyses the reaction GTP + H2O = GDP + phosphate + H(+). Its function is as follows. GTP hydrolase that promotes the GTP-dependent binding of aminoacyl-tRNA to the A-site of ribosomes during protein biosynthesis. The polypeptide is Elongation factor Tu (Rhizorhabdus wittichii (strain DSM 6014 / CCUG 31198 / JCM 15750 / NBRC 105917 / EY 4224 / RW1) (Sphingomonas wittichii)).